The primary structure comprises 5005 residues: Bridge-like lipid transfer protein family member 1 (5005 aa).

A helical transmembrane segment spans residues 26–46 (NVVWLLVATILSCGWIIYLTY). 3 disordered regions span residues 691 to 721 (LRPSQKTSDRVVSSPSTSSRPPIDPSELPPD), 1218 to 1257 (LSLQVPLRSHSSSSSSEENSSSSAAQPLLAGEKESPSSVA), and 1269 to 1310 (GTKR…LKRQ). Low complexity-rich tracts occupy residues 700 to 711 (RVVSSPSTSSRP) and 1226 to 1240 (SHSSSSSSEENSSSS). The segment covering 1248–1257 (GEKESPSSVA) has biased composition (basic and acidic residues). Residues 1278–1303 (SIPTEISGNSPVSPNTQDKSVGQSPL) are compositionally biased toward polar residues. Phosphoserine is present on residues serine 1301, serine 1305, and serine 1323. At threonine 1325 the chain carries Phosphothreonine. Disordered regions lie at residues 1343-1376 (SDVSRSDENVLDSPKQRRSFGSFPYTPSADSNSF), 1400-1427 (EFEPISSDEGPGTYPGRKKKKKQTQQID), 1521-1548 (TNKRTSKSSLHRPLDLDTPTSEESSSSF), and 1676-1704 (FSENLSSKQDIRGTKTEQSTIGTTNQGQA). A phosphoserine mark is found at serine 1355 and serine 1406. Residues 1521-1530 (TNKRTSKSSL) are compositionally biased toward basic residues. Residues 1691–1704 (TEQSTIGTTNQGQA) show a composition bias toward polar residues. Residues serine 1805 and serine 1808 each carry the phosphoserine modification. Disordered stretches follow at residues 1924 to 1991 (DTER…PLMP), 2401 to 2420 (SDQNTLDGTHSQHSTSQDDV), and 2598 to 2677 (TAGS…KDVV). 4 stretches are compositionally biased toward polar residues: residues 1931–1948 (LTSNNSSDSPTGSGYNTD), 1959–1971 (TSPSSDLNGNSVS), 2401–2418 (SDQNTLDGTHSQHSTSQD), and 2598–2608 (TAGSASPTPTF). Phosphoserine is present on residues serine 2601 and serine 2603. Low complexity predominate over residues 2619-2638 (SDFSRSSRGSLNGGNRVNNA). The segment covering 2643–2665 (TNNENNKKESRNKNSLGRSERRT) has biased composition (basic and acidic residues). Phosphoserine is present on serine 2755. The tract at residues 2928–2967 (RQPSTAPQPVKEDIATPLPSEKTPTSVNQTPVETNEFPQL) is disordered. The segment covering 2949 to 2964 (KTPTSVNQTPVETNEF) has biased composition (polar residues). Phosphoserine is present on serine 3562. Residues 3612–3622 (PSYSRSKSISA) are compositionally biased toward polar residues. Disordered regions lie at residues 3612–3661 (PSYS…VTFN), 3686–3744 (SSNS…ERFY), 3821–3843 (RRSYDRSSRSLDQDSPSKKKKFQ), 3914–3954 (YGMK…KGKG), 4088–4146 (GTTY…SSSS), and 4325–4394 (QSAS…KAAS). Serine 3653 is modified (phosphoserine). A compositionally biased stretch (polar residues) spans 3686–3700 (SSNSEGSCSVFSSPK). Residues 3727-3736 (EDSEKDEKDE) show a composition bias toward acidic residues. A compositionally biased stretch (basic and acidic residues) spans 3821–3837 (RRSYDRSSRSLDQDSPS). 2 stretches are compositionally biased toward polar residues: residues 3931–3940 (TVQSKTNTLL) and 4098–4113 (PGGNATQSGTKTSASK). The segment covering 4122 to 4146 (LGSPLGRSRHSSSQSDLTSSSSSSS) has biased composition (low complexity). Residue serine 4124 is modified to Phosphoserine. Polar residues predominate over residues 4325–4358 (QSASFTHMPQSPNVFNEHMTNSTMSPGTVGQSLK). Residues 4359–4372 (SPASIRSRSVSDSS) show a composition bias toward low complexity. A compositionally biased stretch (polar residues) spans 4381-4394 (KTSTPFNKSNKAAS).

In terms of tissue distribution, highly expressed in testis and ovary. Weakly or not expressed in other tissues.

The protein resides in the cell membrane. It localises to the endoplasmic reticulum membrane. It is found in the mitochondrion membrane. Functionally, tube-forming lipid transport protein which provides phosphatidylethanolamine for glycosylphosphatidylinositol (GPI) anchor synthesis in the endoplasmic reticulum. Plays a role in endosomal trafficking and endosome recycling. Also involved in the actin cytoskeleton and cilia structural dynamics. Acts as a regulator of phagocytosis. This chain is Bridge-like lipid transfer protein family member 1, found in Homo sapiens (Human).